The following is a 157-amino-acid chain: Nuclear cap-binding protein subunit 2 (157 aa).

MRNA-binding positions include tyrosine 17, tyrosine 40, 109–113, 120–124, and 130–131; these read RADWD, RQYGR, and QV. The region spanning 37–115 is the RRM domain; that stretch reads CTLYVGNLSY…RVIRADWDAG (79 aa).

The protein belongs to the RRM NCBP2 family. In terms of assembly, component of the nuclear cap-binding complex (CBC), a heterodimer composed of ncbp-1 and ncbp-2 that interacts with m7GpppG-capped RNA.

It is found in the nucleus. Its function is as follows. Component of the cap-binding complex (CBC), which binds co-transcriptionally to the 5' cap of pre-mRNAs and is involved in various processes such as pre-mRNA splicing and RNA-mediated gene silencing (RNAi). The CBC complex is involved in miRNA-mediated RNA interference and is required for primary microRNAs (miRNAs) processing. In the CBC complex, ncbp-2 recognizes and binds capped RNAs (m7GpppG-capped RNA) but requires ncbp-1 to stabilize the movement of its N-terminal loop and lock the CBC into a high affinity cap-binding state with the cap structure. This Caenorhabditis briggsae protein is Nuclear cap-binding protein subunit 2 (ncbp-2).